A 242-amino-acid chain; its full sequence is Protein MHF1 homolog (242 aa).

The segment at 208-242 is disordered; the sequence is LKAKEPQSERKRKKGSAKKEDKASSSNAVRITTDL. The segment covering 231–242 has biased composition (polar residues); sequence SSSNAVRITTDL.

Belongs to the TAF9 family. CENP-S/MHF1 subfamily.

It is found in the nucleus. Its function is as follows. Involved in the promotion of spontaneous somatic homologous recombination (HR) events, which is opposite to the function of FANCM in ordered HR. Only FANCM is essential for replicative repair in the absence of the endonuclease MUS81. Acts in the same pathway as FANCM to restrain class II meiotic crossing over (CO), and acts with FANCM during meiosis to repair interstrand cross-links (ICLs). This common pathway between MHF1 and FANCM is in parallel to the pathway that involves the RECQ4A helicase. This is Protein MHF1 homolog from Arabidopsis thaliana (Mouse-ear cress).